Here is a 344-residue protein sequence, read N- to C-terminus: Transcription factor JunB (344 aa).

Glycyl lysine isopeptide (Lys-Gly) (interchain with G-Cter in SUMO2) cross-links involve residues Lys-4, Lys-33, and Lys-36. A compositionally biased stretch (gly residues) spans 51–65 (KGPGARGPGPEGSGA). Residues 51–75 (KGPGARGPGPEGSGAGSYFSGQGSD) form a disordered region. Lys-81 is covalently cross-linked (Glycyl lysine isopeptide (Lys-Gly) (interchain with G-Cter in SUMO2)). Phosphothreonine occurs at positions 102 and 104. Ser-117 carries the phosphoserine modification. A Glycyl lysine isopeptide (Lys-Gly) (interchain with G-Cter in SUMO2) cross-link involves residue Lys-138. 2 disordered regions span residues 181-202 (NLSSYSPASAPSGGSGTAVGTG) and 237-257 (KEEPQTVPEARSRDATPPVSP). Over residues 183-192 (SSYSPASAPS) the composition is skewed to low complexity. Lys-237 is subject to N6-acetyllysine; alternate. Lys-237 is covalently cross-linked (Glycyl lysine isopeptide (Lys-Gly) (interchain with G-Cter in SUMO1); alternate). A Glycyl lysine isopeptide (Lys-Gly) (interchain with G-Cter in SUMO2); alternate cross-link involves residue Lys-237. Residues 237–250 (KEEPQTVPEARSRD) show a composition bias toward basic and acidic residues. Ser-248 carries the post-translational modification Phosphoserine. At Thr-252 the chain carries Phosphothreonine. Phosphoserine is present on Ser-256. The basic motif stretch occupies residues 265–292 (RIKVERKRLRNRLAATKCRKRKLERIAR). The region spanning 265-328 (RIKVERKRLR…AQLKQKVMTH (64 aa)) is the bZIP domain. Residues 293 to 321 (LEDKVKTLKAENAGLSSAAGLLREQVAQL) are leucine-zipper. A Glycyl lysine isopeptide (Lys-Gly) (interchain with G-Cter in SUMO2) cross-link involves residue Lys-340.

This sequence belongs to the bZIP family. Jun subfamily. As to quaternary structure, binds DNA as a homodimer or as a heterodimer with another member of the Jun/Fos family. Component of an AP-1 transcription factor complex composed of JUN-FOS heterodimers. As part of the AP-1 transcription factor complex, forms heterodimers with FOSB, thereby binding to the AP-1 consensus sequence and stimulating transcription. Interacts with NFE2 (via its WW domains). Ubiquitinated by ITCH, leading to its degradation.

The protein localises to the nucleus. Functionally, transcription factor involved in regulating gene activity following the primary growth factor response. Binds to the DNA sequence 5'-TGA[GC]TCA-3'. Heterodimerizes with proteins of the FOS family to form an AP-1 transcription complex, thereby enhancing its DNA binding activity to an AP-1 consensus sequence 5'-TGA[GC]TCA-3' and enhancing its transcriptional activity. This Mus musculus (Mouse) protein is Transcription factor JunB (Junb).